The following is a 395-amino-acid chain: Small ribosomal subunit protein mS31 (395 aa).

Residues 1-65 constitute a mitochondrion transit peptide; sequence MFPRVSTFLP…IQRYFGTNSV (65 aa). 2 disordered regions span residues 70 to 97 and 175 to 196; these read KDKQSVRTEETSKETSESQDSEKENTKK and SELLSQLQQHEEESRAQRDAKR. The segment covering 183 to 196 has biased composition (basic and acidic residues); it reads QHEEESRAQRDAKR.

Belongs to the mitochondrion-specific ribosomal protein mS31 family. Component of the mitochondrial small ribosomal subunit (mt-SSU). Mature mammalian 55S mitochondrial ribosomes consist of a small (28S) and a large (39S) subunit. The 28S small subunit contains a 12S ribosomal RNA (12S mt-rRNA) and 30 different proteins. The 39S large subunit contains a 16S rRNA (16S mt-rRNA), a copy of mitochondrial valine transfer RNA (mt-tRNA(Val)), which plays an integral structural role, and 52 different proteins.

It localises to the mitochondrion. In Homo sapiens (Human), this protein is Small ribosomal subunit protein mS31 (MRPS31).